We begin with the raw amino-acid sequence, 236 residues long: Pyridoxine 5'-phosphate synthase (236 aa).

Position 7 (Asn-7) interacts with 3-amino-2-oxopropyl phosphate. 9 to 10 (DH) provides a ligand contact to 1-deoxy-D-xylulose 5-phosphate. Arg-18 contributes to the 3-amino-2-oxopropyl phosphate binding site. His-43 functions as the Proton acceptor in the catalytic mechanism. Residues Arg-45 and His-50 each contribute to the 1-deoxy-D-xylulose 5-phosphate site. Catalysis depends on Glu-69, which acts as the Proton acceptor. Thr-99 contributes to the 1-deoxy-D-xylulose 5-phosphate binding site. The active-site Proton donor is the His-190. 3-amino-2-oxopropyl phosphate is bound by residues Gly-191 and 212–213 (GH).

The protein belongs to the PNP synthase family. In terms of assembly, homooctamer; tetramer of dimers.

The protein localises to the cytoplasm. It catalyses the reaction 3-amino-2-oxopropyl phosphate + 1-deoxy-D-xylulose 5-phosphate = pyridoxine 5'-phosphate + phosphate + 2 H2O + H(+). It participates in cofactor biosynthesis; pyridoxine 5'-phosphate biosynthesis; pyridoxine 5'-phosphate from D-erythrose 4-phosphate: step 5/5. Catalyzes the complicated ring closure reaction between the two acyclic compounds 1-deoxy-D-xylulose-5-phosphate (DXP) and 3-amino-2-oxopropyl phosphate (1-amino-acetone-3-phosphate or AAP) to form pyridoxine 5'-phosphate (PNP) and inorganic phosphate. This Desulfosudis oleivorans (strain DSM 6200 / JCM 39069 / Hxd3) (Desulfococcus oleovorans) protein is Pyridoxine 5'-phosphate synthase.